We begin with the raw amino-acid sequence, 671 residues long: Synaptotagmin-like protein 4 (671 aa).

One can recognise a RabBD domain in the interval 4–122 (LLDLSFLSEE…KATGDWFYDQ (119 aa)). Residues 63 to 105 (CARCQESLGRLSPKTNTCRGCNHLVCRDCRIQESNGTWRCKVC) form an FYVE-type zinc finger. The tract at residues 199–243 (SESLDSFTADSDSTSRRDSLDKSGLFPEWKKMSAPKSQVEKETQP) is disordered. Residues S201, S204, S217, S221, S274, and S289 each carry the phosphoserine modification. A C2 1 domain is found at 356–478 (VTGRIAFSLK…KLDKKLDHCL (123 aa)). S488 bears the Phosphoserine mark. The C2 2 domain maps to 507-633 (PASKTPVGGD…ISNGEVVDWM (127 aa)).

Part of a ternary complex containing STX1A and RAB27A. Can bind both dominant negative and dominant active mutants of RAB27A. Binds STXBP1, RAB3A, RAB8A and RAB27B. Interacts with MYO5A.

Its subcellular location is the membrane. The protein resides in the cell membrane. It localises to the cytoplasmic vesicle. It is found in the secretory vesicle membrane. Functionally, modulates exocytosis of dense-core granules and secretion of hormones in the pancreas and the pituitary. Interacts with vesicles containing negatively charged phospholipids in a Ca(2+)-independent manner. This Homo sapiens (Human) protein is Synaptotagmin-like protein 4 (SYTL4).